Reading from the N-terminus, the 199-residue chain is Transcription factor 15 (199 aa).

The segment at 25-67 (EENRSESDASDQSFGCCEGPEAARRGPGPGGGRRAGGGGGAGP) is disordered. Residues 51 to 66 (PGPGGGRRAGGGGGAG) show a composition bias toward gly residues. The 53-residue stretch at 72–124 (RQRQAANARERDRTQSVNTAFTALRTLIPTEPVDRKLSKIETVRLASSYIAHL) folds into the bHLH domain.

As to quaternary structure, heterodimer; efficient DNA binding requires dimerization with another bHLH protein, such as TCF3/E12. Interacts with MEOX2.

It localises to the nucleus. Its function is as follows. Early transcription factor that plays a key role in somitogenesis, paraxial mesoderm development and regulation of stem cell pluripotency. Essential for the mesenchymal to epithelial transition associated with somite formation. Required for somite morphogenesis, thereby regulating patterning of the axial skeleton and skeletal muscles. Required for proper localization of somite epithelium markers during the mesenchymal to epithelial transition. Also plays a key role in regulation of stem cell pluripotency. Promotes pluripotency exit of embryonic stem cells (ESCs) by priming ESCs for differentiation. Acts as a key regulator of self-renewal of hematopoietic stem cells (HSCs) by mediating HSCs quiescence and long-term self-renewal. Together with MEOX2, regulates transcription in heart endothelial cells to regulate fatty acid transport across heart endothelial cells. Acts by forming a heterodimer with another helix-loop-helix (bHLH) protein, such as TCF3/E12, that binds DNA on E-box motifs (5'-CANNTG-3') and activates transcription of target genes. The sequence is that of Transcription factor 15 from Homo sapiens (Human).